We begin with the raw amino-acid sequence, 365 residues long: Probable 7-methylxanthine methyltransferase 3 (365 aa).

Y18 lines the S-adenosyl-L-homocysteine pocket. T25 contacts theobromine. S-adenosyl-L-homocysteine contacts are provided by C62, Q67, D99, L100, S132, and F133. Y150, H153, and W154 together coordinate theobromine. Mg(2+)-binding residues include N170, F258, and N259. Residue F311 coordinates theobromine.

This sequence belongs to the methyltransferase superfamily. Type-7 methyltransferase family. Mg(2+) serves as cofactor.

The catalysed reaction is 7-methylxanthine + S-adenosyl-L-methionine = theobromine + S-adenosyl-L-homocysteine + H(+). It participates in alkaloid biosynthesis. Involved in the biosynthesis of theobromine. In Theobroma cacao (Cacao), this protein is Probable 7-methylxanthine methyltransferase 3.